The following is a 209-amino-acid chain: MSVHEVNHPLVKHKIGLMREAGISTKKFRELTSEIACLLAYEASRDFQIEPRTITGWDGSKVMIQQLKGKKVTVVPILRAGIGMLDGVLDMIPNAKVSVVGLARNEETLEAHTYFERFVGSLDERLALIIDPMLATGGSMAATIEMLKKNGCLQIRVLCLVAAPEGLAKITAAYPEIDIYVAAIDERLNEQGYILPGLGDAGDKIFGTK.

Residues Arg79, Arg104, and 131–139 (DPMLATGGS) each bind 5-phospho-alpha-D-ribose 1-diphosphate. Uracil-binding positions include Ile194 and 199–201 (GDA). Asp200 contacts 5-phospho-alpha-D-ribose 1-diphosphate.

The protein belongs to the UPRTase family. Mg(2+) serves as cofactor.

It catalyses the reaction UMP + diphosphate = 5-phospho-alpha-D-ribose 1-diphosphate + uracil. It functions in the pathway pyrimidine metabolism; UMP biosynthesis via salvage pathway; UMP from uracil: step 1/1. With respect to regulation, allosterically activated by GTP. Catalyzes the conversion of uracil and 5-phospho-alpha-D-ribose 1-diphosphate (PRPP) to UMP and diphosphate. This chain is Uracil phosphoribosyltransferase, found in Citrifermentans bemidjiense (strain ATCC BAA-1014 / DSM 16622 / JCM 12645 / Bem) (Geobacter bemidjiensis).